The sequence spans 634 residues: Acetylcholinesterase (634 aa).

The first 23 residues, 1–23 (MKTSDILLLPTVLLTFLFHNCFA), serve as a signal peptide directing secretion. Cysteines 91 and 118 form a disulfide. 2 N-linked (GlcNAc...) asparagine glycosylation sites follow: Asn133 and Asn184. Ser225 serves as the catalytic Acyl-ester intermediate. A disulfide bridge connects residues Cys279 and Cys290. An N-linked (GlcNAc...) asparagine glycan is attached at Asn283. Glu352 (charge relay system) is an active-site residue. Asn368 is a glycosylation site (N-linked (GlcNAc...) asparagine). A disulfide bond links Cys427 and Cys580. The active-site Charge relay system is the His495. Asn512 and Asn592 each carry an N-linked (GlcNAc...) asparagine glycan.

The protein belongs to the type-B carboxylesterase/lipase family. Dimers and collagen-tailed forms, in which catalytic tetramers are associated with anchoring proteins that attach them to the basal lamina or to cell membranes. In the collagen-tailed forms, subunits are associated with a specific collagen, COLQ, which triggers the formation of isoform T tetramers from dimers.

Its subcellular location is the synapse. The protein resides in the secreted. It is found in the cell membrane. It carries out the reaction acetylcholine + H2O = choline + acetate + H(+). Its function is as follows. Terminates signal transduction at the neuromuscular junction by rapid hydrolysis of the acetylcholine released into the synaptic cleft. In Danio rerio (Zebrafish), this protein is Acetylcholinesterase (ache).